The chain runs to 424 residues: UDP-N-acetylglucosamine 1-carboxyvinyltransferase (424 aa).

22–23 (KN) is a binding site for phosphoenolpyruvate. Arginine 93 contacts UDP-N-acetyl-alpha-D-glucosamine. Cysteine 117 functions as the Proton donor in the catalytic mechanism. Cysteine 117 carries the 2-(S-cysteinyl)pyruvic acid O-phosphothioketal modification. UDP-N-acetyl-alpha-D-glucosamine-binding positions include 122–126 (RPIDL), aspartate 307, and isoleucine 329.

Belongs to the EPSP synthase family. MurA subfamily.

The protein resides in the cytoplasm. The catalysed reaction is phosphoenolpyruvate + UDP-N-acetyl-alpha-D-glucosamine = UDP-N-acetyl-3-O-(1-carboxyvinyl)-alpha-D-glucosamine + phosphate. It functions in the pathway cell wall biogenesis; peptidoglycan biosynthesis. Cell wall formation. Adds enolpyruvyl to UDP-N-acetylglucosamine. In Chlorobium phaeovibrioides (strain DSM 265 / 1930) (Prosthecochloris vibrioformis (strain DSM 265)), this protein is UDP-N-acetylglucosamine 1-carboxyvinyltransferase.